A 28-amino-acid polypeptide reads, in one-letter code: XIIGAPCRRCYHSDGKGGCVRDWSCGQQ.

4-hydroxyproline; in form SHTX-1 (Shd1a) is present on proline 6. Cystine bridges form between cysteine 7/cysteine 19 and cysteine 10/cysteine 25.

It belongs to the sea anemone BBH family. Post-translationally, occurs in 2 forms which differ in the post-translational modification of Pro-6. In form SHTX-1 (Shd1a) Pro-6 is a hydroxyproline while in form SHTX-2 (Shd1b) Pro-6 is unmodified.

It is found in the secreted. It localises to the nematocyst. In terms of biological role, kappa-stichotoxin-Shd1a: inhibits voltage-gated potassium channels (Kv). Kappa-stichotoxin-Shd1b: inhibits voltage-gated potassium channels (Kv). This toxin inhibits the binding of 125I-alpha-dendrotoxin to synaptosomal membranes (IC(50)=270 nM). In Stichodactyla haddoni (Saddle carpet anemone), this protein is Kappa-stichotoxin-Shd1a/kappa-stichotoxin-Shd1b.